Consider the following 201-residue polypeptide: Probable chemoreceptor glutamine deamidase CheD 1 (201 aa).

It belongs to the CheD family.

The catalysed reaction is L-glutaminyl-[protein] + H2O = L-glutamyl-[protein] + NH4(+). Its function is as follows. Probably deamidates glutamine residues to glutamate on methyl-accepting chemotaxis receptors (MCPs), playing an important role in chemotaxis. This Dechloromonas aromatica (strain RCB) protein is Probable chemoreceptor glutamine deamidase CheD 1.